A 517-amino-acid polypeptide reads, in one-letter code: Protein AGENET DOMAIN (AGD)-CONTAINING P1 (517 aa).

The segment at methionine 1–leucine 35 is disordered. Plant Agenet, chromatin-binding stretches follow at residues serine 37–serine 111 and lysine 117–aspartate 173. Residues lysine 177–glutamate 202 form a disordered region. The segment covering glutamate 181–glutamate 202 has biased composition (acidic residues). Plant Agenet, chromatin-binding regions lie at residues glutamine 219–glutamate 287, isoleucine 289–aspartate 345, glutamine 378–valine 446, and serine 449–aspartate 505.

In terms of tissue distribution, expressed ubiquitously during vegetative stage, in meristems (e.g. root tips and shoot apical meristem), and in ovules and young seeds during reproductive stage.

The protein resides in the nucleus. In terms of biological role, heterochromatin-binding protein that preferentially occupies long transposons and specifically recognizes the histone H3 'Lys-9' methylation (H3K9me) marks, with a stronger affinity for dimethylated H3K9 (H3K9me2). Required for transcriptional silencing, non-CG DNA methylation (e.g. CHG and CHH regions), and H3K9 dimethylation (H3K9me2) at some loci. Mediates heterochromatin phase separation and chromocenter formation. This is Protein AGENET DOMAIN (AGD)-CONTAINING P1 from Arabidopsis thaliana (Mouse-ear cress).